The chain runs to 464 residues: Glycine receptor subunit alpha-3 (464 aa).

Positions 1–33 are cleaved as a signal peptide; that stretch reads MAHVRHFRTLVSGFYFWEAALLLSLVATKETNS. Residues 34–255 are Extracellular-facing; the sequence is ARSRSAPMSP…RFHLERQMGY (222 aa). An N-linked (GlcNAc...) asparagine glycan is attached at Asn71. Residues Cys171 and Cys185 are joined by a disulfide bond. Positions 225 and 227 each coordinate Zn(2+). Cys231 and Cys242 are disulfide-bonded. 235–240 lines the strychnine pocket; sequence YNTGKF. Position 248 (His248) interacts with Zn(2+). Residues 256 to 277 traverse the membrane as a helical segment; it reads YLIQMYIPSLLIVILSWVSFWI. Residues 278-282 lie on the Cytoplasmic side of the membrane; sequence NMDAA. Residues 283–303 traverse the membrane as a helical segment; sequence PARVALGITTVLTMTTQSSGS. Over 304–314 the chain is Extracellular; it reads RASLPKVSYVK. The chain crosses the membrane as a helical span at residues 315–335; the sequence is AIDIWMAVCLLFVFSALLEYA. Residues 336-430 lie on the Cytoplasmic side of the membrane; that stretch reads AVNFVSRQHK…FIDRAKKIDT (95 aa). Ser370 is modified (phosphoserine). A Phosphoserine; by PKA modification is found at Ser379. The helical transmembrane segment at 431 to 451 threads the bilayer; that stretch reads ISRACFPLAFLIFNIFYWVIY. Over 452–464 the chain is Extracellular; that stretch reads KILRHEDIHQQQD.

Belongs to the ligand-gated ion channel (TC 1.A.9) family. Glycine receptor (TC 1.A.9.3) subfamily. GLRA3 sub-subfamily. Homopentamer (in vitro). Heteropentamer composed of GLRA3 and GLRB. Both homopentamers and heteropentamers form functional ion channels, but their characteristics are subtly different. Phosphorylated by PKA; this causes down-regulation of channel activity. Dephosphorylated in response to activation of HTR1A signaling; this increases channel activity. As to expression, detected in brainstem, also in neurons that control rhythmic breathing. Detected in superficial laminae of the dorsal horn of the thoracic spinal cord. Detected in dentate gyrus in hippocampus, especially in stratum granulare. Detected in the inner plexiform layer in the retina (at protein level). Detected in midbrain, thalamus, brain cortex, hippocampus, and at lower levels in cerebellum.

The protein resides in the postsynaptic cell membrane. It localises to the synapse. Its subcellular location is the perikaryon. The protein localises to the cell projection. It is found in the dendrite. The protein resides in the cell membrane. It catalyses the reaction chloride(in) = chloride(out). With respect to regulation, inhibited by prostaglandin E2, probably via PKA-mediated phosphorylation at Ser-379. Its function is as follows. Glycine receptors are ligand-gated chloride channels. Channel opening is triggered by extracellular glycine. Channel characteristics depend on the subunit composition; heteropentameric channels display faster channel closure. Plays an important role in the down-regulation of neuronal excitability. Contributes to the generation of inhibitory postsynaptic currents. Contributes to increased pain perception in response to increased prostaglandin E2 levels. Plays a role in the regulation of breathing rhythm, especially of the duration of the postinspiratory phase. Plays a role in cellular responses to ethanol. The chain is Glycine receptor subunit alpha-3 (Glra3) from Mus musculus (Mouse).